The sequence spans 186 residues: uncharacterized protein (186 aa).

The next 3 helical transmembrane spans lie at 43–63, 69–89, and 143–163; these read GAWVIHIVLIAALRLIFHAIP, LAWTLTNLTYMAGSFIMFHWV, and WMFLVNIWALFMVLIPKLPAV.

It localises to the endoplasmic reticulum membrane. This is an uncharacterized protein from Schizosaccharomyces pombe (strain 972 / ATCC 24843) (Fission yeast).